The sequence spans 189 residues: HGPRTase-like protein 2 (189 aa).

This sequence belongs to the purine/pyrimidine phosphoribosyltransferase family. Archaeal HPRT subfamily.

Its function is as follows. May catalyze a purine salvage reaction, the substrate is unknown. The polypeptide is HGPRTase-like protein 2 (Haloarcula marismortui (strain ATCC 43049 / DSM 3752 / JCM 8966 / VKM B-1809) (Halobacterium marismortui)).